We begin with the raw amino-acid sequence, 638 residues long: 9-cis-epoxycarotenoid dioxygenase NCED1, chloroplastic (638 aa).

A chloroplast-targeting transit peptide spans 1 to 80 (MQRICPAHCS…QTEQEDEQLV (80 aa)). Low complexity-rich tracts occupy residues 28–37 (AASAAPQSPS), 44–69 (ASAAPPSAAASTTVLTSPLVTTTRTP), and 92–102 (TTNGRAAPSQS). 2 disordered regions span residues 28–80 (AASA…EQLV) and 92–113 (TTNGRAAPSQSRPRRRPAPAAA). His-331, His-380, His-446, and His-624 together coordinate Fe cation.

It belongs to the carotenoid oxygenase family. It depends on Fe(2+) as a cofactor.

It is found in the plastid. Its subcellular location is the chloroplast. The catalysed reaction is a 9-cis-epoxycarotenoid + O2 = a 12'-apo-carotenal + 2-cis,4-trans-xanthoxin. It carries out the reaction 9-cis-violaxanthin + O2 = (3S,5R,6S)-5,6-epoxy-3-hydroxy-5,6-dihydro-12'-apo-beta-caroten-12'-al + 2-cis,4-trans-xanthoxin. It catalyses the reaction 9'-cis-neoxanthin + O2 = (3S,5R,6R)-3,5-dihydroxy-6,7-didehydro-5,6-dihydro-12'-apo-beta-caroten-12'-al + 2-cis,4-trans-xanthoxin. Has a 11,12(11',12') 9-cis epoxycarotenoid cleavage activity. Catalyzes the first step of abscisic-acid biosynthesis from carotenoids. The sequence is that of 9-cis-epoxycarotenoid dioxygenase NCED1, chloroplastic from Oryza sativa subsp. japonica (Rice).